A 248-amino-acid polypeptide reads, in one-letter code: Probable transcriptional regulatory protein FTN_1028 (248 aa).

This sequence belongs to the TACO1 family.

The protein resides in the cytoplasm. The polypeptide is Probable transcriptional regulatory protein FTN_1028 (Francisella tularensis subsp. novicida (strain U112)).